The sequence spans 233 residues: Modulator of macroautophagy TMEM150B (233 aa).

Topologically, residues 1–7 (MWGYLSL) are cytoplasmic. A helical transmembrane segment spans residues 8-28 (MPVFLAVWAISGVWIVFAIAV). The Extracellular segment spans residues 29 to 51 (TNRTVDLSKGFPYISICGSFPPQ). An N-linked (GlcNAc...) asparagine glycan is attached at Asn-30. Residues 52-72 (SCIFSQVLNMGAALAAWICIV) form a helical membrane-spanning segment. The Cytoplasmic portion of the chain corresponds to 73–84 (RYHQLRDWGVRR). A helical transmembrane segment spans residues 85–105 (WPNQLILWTGLLCALGTSVVG). At 106 to 116 (NFQEKNQRPTH) the chain is on the extracellular side. A helical transmembrane segment spans residues 117–137 (LAGAFLAFILGNVYFWLQLLL). Residues 138–155 (WRLKRLPQPGAAWIGPLR) lie on the Cytoplasmic side of the membrane. The helical transmembrane segment at 156-176 (LGLCSVCTILIVAMIVLHACS) threads the bilayer. Residues 177–185 (LRSVSAACE) lie on the Extracellular side of the membrane. The chain crosses the membrane as a helical span at residues 186–206 (WVVAMLLFALFGLLAVDFSAL). Over 207–233 (ESCTLCVQPWPSLSPPPASPISLPVQL) the chain is Cytoplasmic.

Belongs to the DRAM/TMEM150 family. As to expression, highly expressed in the colon and lung with comparatively high levels also detectable in the lymph nodes, placenta, duodenum, peripheral blood mononuclear cells and spleen.

The protein localises to the cell membrane. It localises to the endosome membrane. Its subcellular location is the cytoplasmic vesicle. The protein resides in the autophagosome membrane. Functionally, modulator of macroautophagy that causes accumulation of autophagosomes under basal conditions and enhances autophagic flux. Represses cell death and promotes long-term clonogenic survival of cells grown in the absence of glucose in a macroautophagy-independent manner. May have some role in extracellular matrix engulfment or growth factor receptor recycling, both of which can modulate cell survival. In Homo sapiens (Human), this protein is Modulator of macroautophagy TMEM150B.